Consider the following 137-residue polypeptide: uncharacterized protein (137 aa).

Residues 111-131 (LAVGVLVGSNLVVGSLVFALL) traverse the membrane as a helical segment.

It localises to the membrane. This is an uncharacterized protein from Saccharomyces cerevisiae (strain ATCC 204508 / S288c) (Baker's yeast).